We begin with the raw amino-acid sequence, 44 residues long: Protein PsbN (44 aa).

Residues 6-26 form a helical membrane-spanning segment; that stretch reads FFFTIFVWFLLISVTGYSIYV.

It belongs to the PsbN family.

The protein resides in the plastid. It localises to the chloroplast thylakoid membrane. Its function is as follows. May play a role in photosystem I and II biogenesis. The chain is Protein PsbN from Bigelowiella natans (Pedinomonas minutissima).